Reading from the N-terminus, the 753-residue chain is Catalase-peroxidase (753 aa).

A cross-link (tryptophyl-tyrosyl-methioninium (Trp-Tyr) (with M-269)) is located at residues 91–243 (WHSAGTYRIG…LGAVQMGLIY (153 aa)). His-92 (proton acceptor) is an active-site residue. The tryptophyl-tyrosyl-methioninium (Tyr-Met) (with W-91) cross-link spans 243–269 (YVNPEGPDGNPDPLAAAHDIRETFARM). His-284 is a heme b binding site.

Belongs to the peroxidase family. Peroxidase/catalase subfamily. In terms of assembly, homodimer or homotetramer. The cofactor is heme b. In terms of processing, formation of the three residue Trp-Tyr-Met cross-link is important for the catalase, but not the peroxidase activity of the enzyme.

The enzyme catalyses H2O2 + AH2 = A + 2 H2O. It catalyses the reaction 2 H2O2 = O2 + 2 H2O. Bifunctional enzyme with both catalase and broad-spectrum peroxidase activity. This Paraburkholderia xenovorans (strain LB400) protein is Catalase-peroxidase.